A 490-amino-acid polypeptide reads, in one-letter code: Transcriptional regulator FleQ (490 aa).

Residue Leu-142 coordinates 3',3'-c-di-GMP. Residues Val-147 and 177–182 (GTGKEV) each bind ADP. Residues 186–189 (NLHY) and 330–341 (ELISRMEHEKRG) each bind 3',3'-c-di-GMP. Positions 334 and 363 each coordinate ADP.

As to quaternary structure, forms homodimers. Forms homohexamers that inhibit transcription initiation. Interacts with FleN; this complex is formed in the presence as well as in the absence of c-di-GMP or ATP.

With respect to regulation, C-di-GMP interaction leads to active site obstruction, hexameric ring destabilization thus relieving DNA bending and activating gene transcription. AAA+ ATPase enhancer-binding protein that acts as a transcription regulator and plays a role in the modulation of mucin adhesion and flagellar gene expression. In addition to flagella genes, also regulates expression of biofilm-related genes. Functions as a transcriptional repressor in the absence of c-di-GMP and as an activator when c-di-GMP is present. In Pseudomonas aeruginosa (strain ATCC 15692 / DSM 22644 / CIP 104116 / JCM 14847 / LMG 12228 / 1C / PRS 101 / PAO1), this protein is Transcriptional regulator FleQ.